The chain runs to 346 residues: MANAYKQAGVDIEAGYEAVSRMKKHVQTTMRKEVLGGLGGFGGMFDLSKFALEEPVLVSGTDGVGTKLMLAFMADKHDTIGIDAVAMCVNDIVVQGAEPLFFLDYIACGKAEPSKIENIVKGISEGCRQAGCALIGGETAEMPGMYSTEEYDLAGFTVGIVDKKKIVTGEKIEAGHVLIGLASSGIHSNGYSLVRKVLLEDGELSLDRIYGRLELPLGEELLKPTKIYVKPILELLKNHEVYGMAHITGGGFIENIPRMLPEGIGAEIELGSWKIQPIFSLLQEVGKLEEKEMFNIFNMGIGMVVAVKEEDAKDIVRLLEEQGETARIIGRTVKGAGVTFNGGKAL.

The protein belongs to the AIR synthase family.

Its subcellular location is the cytoplasm. It carries out the reaction 2-formamido-N(1)-(5-O-phospho-beta-D-ribosyl)acetamidine + ATP = 5-amino-1-(5-phospho-beta-D-ribosyl)imidazole + ADP + phosphate + H(+). It participates in purine metabolism; IMP biosynthesis via de novo pathway; 5-amino-1-(5-phospho-D-ribosyl)imidazole from N(2)-formyl-N(1)-(5-phospho-D-ribosyl)glycinamide: step 2/2. The polypeptide is Phosphoribosylformylglycinamidine cyclo-ligase (Bacillus thuringiensis subsp. konkukian (strain 97-27)).